The chain runs to 353 residues: Cyclin-dependent kinase-like 1 (353 aa).

The 283-residue stretch at 4-286 (YDRLSKLGEG…CSELMLHGIF (283 aa)) folds into the Protein kinase domain. Residues 10–18 (LGEGSYGVV) and Lys33 contribute to the ATP site. The active-site Proton acceptor is Asp126. Positions 331–353 (GGNHGNNNNNGNGINRNFLPTIS) are disordered. Residues 335–347 (GNNNNNGNGINRN) are compositionally biased toward low complexity.

The protein belongs to the protein kinase superfamily. Ser/Thr protein kinase family. As to expression, specifically expressed in head and tail ciliated sensory neurons.

Its subcellular location is the cell projection. The protein resides in the cilium. It carries out the reaction L-seryl-[protein] + ATP = O-phospho-L-seryl-[protein] + ADP + H(+). The catalysed reaction is L-threonyl-[protein] + ATP = O-phospho-L-threonyl-[protein] + ADP + H(+). In terms of biological role, modulates cilium assembly. The polypeptide is Cyclin-dependent kinase-like 1 (Caenorhabditis elegans).